Reading from the N-terminus, the 358-residue chain is Phenylalanine--tRNA ligase alpha subunit (358 aa).

Residue Glu279 coordinates Mg(2+).

This sequence belongs to the class-II aminoacyl-tRNA synthetase family. Phe-tRNA synthetase alpha subunit type 1 subfamily. Tetramer of two alpha and two beta subunits. Requires Mg(2+) as cofactor.

Its subcellular location is the cytoplasm. It catalyses the reaction tRNA(Phe) + L-phenylalanine + ATP = L-phenylalanyl-tRNA(Phe) + AMP + diphosphate + H(+). The chain is Phenylalanine--tRNA ligase alpha subunit from Variovorax paradoxus (strain S110).